Reading from the N-terminus, the 492-residue chain is MDPYKHRPSSAFNSPFWTTNSGAPVWNNNSSLTVGPRGQYLLEDYHLVEKLANFDRERIPERVVHARGASAKGFFEVTHDISHLTCADFLRAPGVQTPVIVRFSTVIHERGSPETLRDPRGFAVKFYTREGNFDLVGNNFPVFFIRDGMKFPDMVHALKPNPKSHIQENWRILDFFSHHPESLHMFTFLFDDLGVPQDYRHMEGSGVNTYTLINKAGKAHYVKFHWKPTCGVKCLLEDEAIKVGGANHSHATQDLYDSIAAGNYPEWKLFIQTIDPDHEDKFDFDPLDVTKTWPEDILPLQPVGRLVLNKNIDNFFAENEQLAFCPAIVVPGIYYSDDKLLQTRIFSYSDTQRHRLGPNYLQLPANAPKCAHHNNHHEGFMNFMHRDEEINYFPSRYDPVRHAEMFPIPPAVCTGRREKCIIEKENNFKQPGERYRSWAADRQERFICRWVDALSDPRVTHEIRSIWISYWSQADKSVGQKLASLLNVRPSI.

Residues His65 and Asn138 contribute to the active site. Tyr348 contributes to the heme binding site.

Belongs to the catalase family. Homotetramer. It depends on heme as a cofactor.

It is found in the peroxisome. It catalyses the reaction 2 H2O2 = O2 + 2 H2O. Occurs in almost all aerobically respiring organisms and serves to protect cells from the toxic effects of hydrogen peroxide. In Gossypium hirsutum (Upland cotton), this protein is Catalase isozyme 1 (CAT1).